Reading from the N-terminus, the 215-residue chain is Triosephosphate isomerase (215 aa).

The active-site Electrophile is H82. Catalysis depends on E153, which acts as the Proton acceptor.

It belongs to the triosephosphate isomerase family. Homodimer.

The enzyme catalyses D-glyceraldehyde 3-phosphate = dihydroxyacetone phosphate. The protein operates within carbohydrate biosynthesis; gluconeogenesis. Its pathway is carbohydrate degradation; glycolysis; D-glyceraldehyde 3-phosphate from glycerone phosphate: step 1/1. This chain is Triosephosphate isomerase (Tpi), found in Heliothis virescens (Tobacco budworm moth).